A 356-amino-acid chain; its full sequence is MDTSRKIIHIDMDAFYASVEQRDHPEFRGKPLIIGGDPNKRGVVATCSYEARKFGVHSAMPTRQAAKLCPNGIFIHGNMAHYVEVSNQIREIFSRYTDIIEPLSLDEAYLDVTENKKGMKSATMVAREIQQTIYQELGLTASAGVSFNKFIAKIASDFKKPAGITVVTPEEAEAFLEQIPVTKFYGVGKVTAEKLHRLGIETGADLKKWSEWDLIRELHKHGYHLYRHVRGRSNNIVNPHRDRKSVGKETTFEFNVLDSRVLEQSLMQFAKKVEERLIKLQKHGKTVVLKLRYSDFTTITKRLTLNEYTNDASQIYQAAALLLIESYTGQDSIRLIGLTVTNLKPVYFENLRLEGL.

The UmuC domain occupies 1 to 188 (MDTSRKIIHI…IPVTKFYGVG (188 aa)). Residues D11 and D106 each contribute to the Mg(2+) site. E107 is a catalytic residue.

Belongs to the DNA polymerase type-Y family. Monomer. Requires Mg(2+) as cofactor.

It localises to the cytoplasm. It catalyses the reaction DNA(n) + a 2'-deoxyribonucleoside 5'-triphosphate = DNA(n+1) + diphosphate. Its function is as follows. Poorly processive, error-prone DNA polymerase involved in untargeted mutagenesis. Copies undamaged DNA at stalled replication forks, which arise in vivo from mismatched or misaligned primer ends. These misaligned primers can be extended by PolIV. Exhibits no 3'-5' exonuclease (proofreading) activity. May be involved in translesional synthesis, in conjunction with the beta clamp from PolIII. The sequence is that of DNA polymerase IV from Listeria monocytogenes serovar 1/2a (strain ATCC BAA-679 / EGD-e).